A 536-amino-acid polypeptide reads, in one-letter code: Subtilisin-like proteinase Spm1 (536 aa).

The N-terminal stretch at 1–15 (MKSVILLSLAACAVA) is a signal peptide. Positions 16–147 (APTAGVETIH…RYEEVKKDEC (132 aa)) are excised as a propeptide. The Inhibitor I9 domain maps to 44–137 (YIIKFKKHVD…IERDTIVHTM (94 aa)). In terms of domain architecture, Peptidase S8 spans 156–462 (PWGLSRVSHR…GGCSNYFEIV (307 aa)). Active-site charge relay system residues include D192 and H224. N-linked (GlcNAc...) asparagine glycosylation is found at N254 and N294. The active-site Charge relay system is the S390.

Belongs to the peptidase S8 family.

The protein resides in the vacuole. The polypeptide is Subtilisin-like proteinase Spm1 (SPM1) (Pyricularia oryzae (strain 70-15 / ATCC MYA-4617 / FGSC 8958) (Rice blast fungus)).